We begin with the raw amino-acid sequence, 116 residues long: Putative pterin-4-alpha-carbinolamine dehydratase (116 aa).

The protein belongs to the pterin-4-alpha-carbinolamine dehydratase family.

The catalysed reaction is (4aS,6R)-4a-hydroxy-L-erythro-5,6,7,8-tetrahydrobiopterin = (6R)-L-erythro-6,7-dihydrobiopterin + H2O. The polypeptide is Putative pterin-4-alpha-carbinolamine dehydratase (Stenotrophomonas maltophilia (strain R551-3)).